The following is a 440-amino-acid chain: 3-phosphoshikimate 1-carboxyvinyltransferase (440 aa).

Residues Lys19, Ser20, and Arg24 each contribute to the 3-phosphoshikimate site. Residue Lys19 participates in phosphoenolpyruvate binding. Residues Gly92 and Arg121 each coordinate phosphoenolpyruvate. Ser166, Gln168, Asp315, and Lys342 together coordinate 3-phosphoshikimate. Position 168 (Gln168) interacts with phosphoenolpyruvate. Asp315 acts as the Proton acceptor in catalysis. Residues Arg346 and Arg399 each contribute to the phosphoenolpyruvate site.

The protein belongs to the EPSP synthase family. In terms of assembly, monomer.

The protein resides in the cytoplasm. It catalyses the reaction 3-phosphoshikimate + phosphoenolpyruvate = 5-O-(1-carboxyvinyl)-3-phosphoshikimate + phosphate. It functions in the pathway metabolic intermediate biosynthesis; chorismate biosynthesis; chorismate from D-erythrose 4-phosphate and phosphoenolpyruvate: step 6/7. In terms of biological role, catalyzes the transfer of the enolpyruvyl moiety of phosphoenolpyruvate (PEP) to the 5-hydroxyl of shikimate-3-phosphate (S3P) to produce enolpyruvyl shikimate-3-phosphate and inorganic phosphate. In Leptospira borgpetersenii serovar Hardjo-bovis (strain JB197), this protein is 3-phosphoshikimate 1-carboxyvinyltransferase.